We begin with the raw amino-acid sequence, 359 residues long: Serine hydrolase-like protein DDB_G0286239 (359 aa).

Residues 38-289 (LALHGWLDNA…VPGSHHFHME (252 aa)) form the AB hydrolase-1 domain. Serine 111 is an active-site residue. The interval 310 to 359 (FTPSSTTQQQQQQQQSAENKKGDNHNQIAEQDLSTSNTSSPIISKPKPNL) is disordered. Over residues 334–351 (HNQIAEQDLSTSNTSSPI) the composition is skewed to polar residues.

Belongs to the AB hydrolase superfamily.

Its function is as follows. Probable serine hydrolase. This chain is Serine hydrolase-like protein DDB_G0286239, found in Dictyostelium discoideum (Social amoeba).